The chain runs to 273 residues: Glutamate racemase (273 aa).

Residues Asp-9–Ser-10 and Tyr-41–Gly-42 contribute to the substrate site. The Proton donor/acceptor role is filled by Cys-73. Asn-74 to Thr-75 lines the substrate pocket. Catalysis depends on Cys-183, which acts as the Proton donor/acceptor. Position 184–185 (Thr-184–His-185) interacts with substrate.

The protein belongs to the aspartate/glutamate racemases family.

The enzyme catalyses L-glutamate = D-glutamate. The protein operates within cell wall biogenesis; peptidoglycan biosynthesis. Provides the (R)-glutamate required for cell wall biosynthesis. In Shewanella oneidensis (strain ATCC 700550 / JCM 31522 / CIP 106686 / LMG 19005 / NCIMB 14063 / MR-1), this protein is Glutamate racemase.